The primary structure comprises 264 residues: Protein-L-isoaspartate O-methyltransferase (264 aa).

Positions 1–49 (MRKPVGSKDGSGVYSRQGLDGYTPANSNTRISTATLPRPEPLRPAASSA) are disordered. The span at 24–35 (PANSNTRISTAT) shows a compositional bias: polar residues. Residue serine 112 is part of the active site.

Belongs to the methyltransferase superfamily. L-isoaspartyl/D-aspartyl protein methyltransferase family.

Its subcellular location is the cytoplasm. The catalysed reaction is [protein]-L-isoaspartate + S-adenosyl-L-methionine = [protein]-L-isoaspartate alpha-methyl ester + S-adenosyl-L-homocysteine. Functionally, catalyzes the methyl esterification of L-isoaspartyl residues in peptides and proteins that result from spontaneous decomposition of normal L-aspartyl and L-asparaginyl residues. It plays a role in the repair and/or degradation of damaged proteins. This is Protein-L-isoaspartate O-methyltransferase from Bordetella avium (strain 197N).